We begin with the raw amino-acid sequence, 237 residues long: Ribosomal RNA small subunit methyltransferase G (237 aa).

Residues Gly-78, Phe-83, 129-130, and Arg-148 contribute to the S-adenosyl-L-methionine site; that span reads AE.

It belongs to the methyltransferase superfamily. RNA methyltransferase RsmG family.

Its subcellular location is the cytoplasm. Specifically methylates the N7 position of a guanine in 16S rRNA. This chain is Ribosomal RNA small subunit methyltransferase G, found in Streptococcus pyogenes serotype M49 (strain NZ131).